The chain runs to 767 residues: Pre-mRNA-splicing factor ATP-dependent RNA helicase PRP43 (767 aa).

Residues 1–74 are disordered; the sequence is MGSKRRFSSE…KLEDGKINPF (74 aa). Residues Ser-8 and Ser-9 each carry the phosphoserine modification. Positions 58-70 are enriched in basic and acidic residues; it reads TSAEEAQKLEDGK. The region spanning 103–268 is the Helicase ATP-binding domain; that stretch reads LKLYQNNQIM…FNDAPLLAVP (166 aa). Residue 116 to 123 participates in ATP binding; that stretch reads GETGSGKT. Residues 215–218 carry the DEAH box motif; sequence DEAH. In terms of domain architecture, Helicase C-terminal spans 293–473; the sequence is TVLQIHATEE…STVLELKKLG (181 aa).

Belongs to the DEAD box helicase family. DEAH subfamily. DDX15/PRP43 sub-subfamily. As to quaternary structure, component of the NTR complex (NTC-related complex), composed of NTR1, NTR2 and PRP43. Interacts with NTR1 and NTR2. Interacts with SPP382.

The protein resides in the nucleus. It carries out the reaction ATP + H2O = ADP + phosphate + H(+). Pre-mRNA processing factor involved in disassembly of spliceosomes after the release of mature mRNA. The chain is Pre-mRNA-splicing factor ATP-dependent RNA helicase PRP43 (PRP43) from Saccharomyces cerevisiae (strain ATCC 204508 / S288c) (Baker's yeast).